The primary structure comprises 390 residues: Olfactomedin-like protein 3A (390 aa).

Residues 1-17 (MRALQLLVLVLSGLVGA) form the signal peptide. Residues 18 to 91 (QQQALMDYLE…RVDRVEREMD (74 aa)) adopt a coiled-coil conformation. One can recognise an Olfactomedin-like domain in the interval 130–386 (DCSDMISSIK…QILYKLQLKK (257 aa)). C131 and C313 are joined by a disulfide. N-linked (GlcNAc...) asparagine glycosylation occurs at N169.

This sequence belongs to the OLFML3 family.

It is found in the secreted. In terms of biological role, secreted scaffold protein that plays an essential role in dorsoventral patterning during early development. Stabilizes axial formation by restricting chordin (CHRD) activity on the dorsal side. Acts by facilitating the association between the tolloid proteases and their substrate chordin (CHRD), leading to enhance chordin (CHRD) degradation. In Danio rerio (Zebrafish), this protein is Olfactomedin-like protein 3A (olfml3a).